Here is a 236-residue protein sequence, read N- to C-terminus: tRNA1(Val) (adenine(37)-N6)-methyltransferase (236 aa).

It belongs to the methyltransferase superfamily. tRNA (adenine-N(6)-)-methyltransferase family.

The protein resides in the cytoplasm. It catalyses the reaction adenosine(37) in tRNA1(Val) + S-adenosyl-L-methionine = N(6)-methyladenosine(37) in tRNA1(Val) + S-adenosyl-L-homocysteine + H(+). Functionally, specifically methylates the adenine in position 37 of tRNA(1)(Val) (anticodon cmo5UAC). The sequence is that of tRNA1(Val) (adenine(37)-N6)-methyltransferase from Actinobacillus pleuropneumoniae serotype 5b (strain L20).